The sequence spans 83 residues: METILGMTAIAVALLIGMGALGTAIGFGLLGGKFLEGAARQPEMAPMLQVKMFIVAGLLDAVTMIGVGIALFMLFTNPLGAML.

A run of 2 helical transmembrane segments spans residues 10 to 30 (IAVA…FGLL) and 52 to 72 (MFIV…IALF).

Belongs to the ATPase C chain family. As to quaternary structure, F-type ATPases have 2 components, F(1) - the catalytic core - and F(0) - the membrane proton channel. F(1) has five subunits: alpha(3), beta(3), gamma(1), delta(1), epsilon(1). F(0) has three main subunits: a(1), b(2) and c(10-14). The alpha and beta chains form an alternating ring which encloses part of the gamma chain. F(1) is attached to F(0) by a central stalk formed by the gamma and epsilon chains, while a peripheral stalk is formed by the delta and b chains.

The protein resides in the cell inner membrane. Functionally, f(1)F(0) ATP synthase produces ATP from ADP in the presence of a proton or sodium gradient. F-type ATPases consist of two structural domains, F(1) containing the extramembraneous catalytic core and F(0) containing the membrane proton channel, linked together by a central stalk and a peripheral stalk. During catalysis, ATP synthesis in the catalytic domain of F(1) is coupled via a rotary mechanism of the central stalk subunits to proton translocation. In terms of biological role, key component of the F(0) channel; it plays a direct role in translocation across the membrane. A homomeric c-ring of between 10-14 subunits forms the central stalk rotor element with the F(1) delta and epsilon subunits. This chain is ATP synthase subunit c, found in Shewanella baltica (strain OS223).